The chain runs to 969 residues: Isoleucine--tRNA ligase (969 aa).

Residues 68–78 (PYANGALHMGH) carry the 'HIGH' region motif. Glu-585 lines the L-isoleucyl-5'-AMP pocket. Positions 626–630 (KMSKS) match the 'KMSKS' region motif. Residue Lys-629 coordinates ATP. Zn(2+)-binding residues include Cys-939, Cys-942, Cys-959, and Cys-962.

Belongs to the class-I aminoacyl-tRNA synthetase family. IleS type 1 subfamily. As to quaternary structure, monomer. The cofactor is Zn(2+).

The protein localises to the cytoplasm. The enzyme catalyses tRNA(Ile) + L-isoleucine + ATP = L-isoleucyl-tRNA(Ile) + AMP + diphosphate. Catalyzes the attachment of isoleucine to tRNA(Ile). As IleRS can inadvertently accommodate and process structurally similar amino acids such as valine, to avoid such errors it has two additional distinct tRNA(Ile)-dependent editing activities. One activity is designated as 'pretransfer' editing and involves the hydrolysis of activated Val-AMP. The other activity is designated 'posttransfer' editing and involves deacylation of mischarged Val-tRNA(Ile). This is Isoleucine--tRNA ligase from Prochlorococcus marinus (strain MIT 9211).